The following is a 656-amino-acid chain: Leucine-rich repeat-containing protein 43 (656 aa).

Residues 1 to 13 show a composition bias toward acidic residues; the sequence is MEASYESESESES. The disordered stretch occupies residues 1 to 25; sequence MEASYESESESESEAGPGTQRPGTG. LRR repeat units lie at residues 150–170, 172–193, 196–215, and 223–244; these read KLEELVLSANRIKEVDATNLP, TLKVLELYGNEISSMECLCAHP, GLQHLGLGHNKLLGPLESLY, and NLVSLDLGFNDLTDLQSMVTSL. One can recognise an LRRCT domain in the interval 258 to 296; that stretch reads NPLALVPYYRGLTIDSLAQLCVLDDITVSPNEKHLFRGL. Positions 512-554 are disordered; sequence LSAKKGKGEKDKKGKEKDRTGKGEKEPAKEWKVLKKKKEPPKE. Over residues 517–544 the composition is skewed to basic and acidic residues; it reads GKGEKDKKGKEKDRTGKGEKEPAKEWKV.

The chain is Leucine-rich repeat-containing protein 43 (LRRC43) from Homo sapiens (Human).